A 194-amino-acid polypeptide reads, in one-letter code: Histone H1 (194 aa).

Alanine 1 is modified (N-acetylalanine; partial). The segment covering 1-14 (AEVAPAPAAAAPAK) has biased composition (low complexity). 2 disordered regions span residues 1–31 (AEVA…GPAV) and 105–194 (AKKP…AAKK). Residues 15–26 (APKKKAAAKPKK) are compositionally biased toward basic residues. The H15 domain maps to 27-100 (SGPAVGELAG…GASGSFKLNK (74 aa)). The span at 116–194 (KAKKVAAKKP…KVKKPAAAKK (79 aa)) shows a compositional bias: basic residues. A phosphoserine mark is found at serine 145, serine 161, and serine 182.

Belongs to the histone H1/H5 family.

It is found in the nucleus. The protein resides in the chromosome. Its function is as follows. Histones H1 are necessary for the condensation of nucleosome chains into higher-order structures. The chain is Histone H1 from Salmo trutta (Brown trout).